The primary structure comprises 291 residues: Transcription antitermination protein NusB (291 aa).

Belongs to the NusB family.

In terms of biological role, involved in transcription antitermination. Required for transcription of ribosomal RNA (rRNA) genes. Binds specifically to the boxA antiterminator sequence of the ribosomal RNA (rrn) operons. The sequence is that of Transcription antitermination protein NusB from Synechococcus sp. (strain JA-2-3B'a(2-13)) (Cyanobacteria bacterium Yellowstone B-Prime).